The primary structure comprises 260 residues: Fructose import ATP-binding protein FrcA (260 aa).

Positions 7–251 constitute an ABC transporter domain; the sequence is LTARGLVKRY…DAVAFMTGAK (245 aa). 39–46 provides a ligand contact to ATP; sequence GDNGAGKS.

This sequence belongs to the ABC transporter superfamily. As to quaternary structure, the complex is composed of two ATP-binding proteins (FrcA), two transmembrane proteins (FrcC) and a solute-binding protein (FrcB).

The protein resides in the cell inner membrane. The catalysed reaction is D-fructose(out) + ATP + H2O = D-fructose(in) + ADP + phosphate + H(+). Part of the high-affinity ABC transporter complex FrcBCA involved in fructose uptake. Is also a high-affinity transporter for ribose and mannose. Responsible for energy coupling to the transport system. The protein is Fructose import ATP-binding protein FrcA of Rhizobium meliloti (Ensifer meliloti).